A 524-amino-acid polypeptide reads, in one-letter code: Bifunctional purine biosynthesis protein PurH (524 aa).

The region spanning M1 to T149 is the MGS-like domain.

It belongs to the PurH family.

It carries out the reaction (6R)-10-formyltetrahydrofolate + 5-amino-1-(5-phospho-beta-D-ribosyl)imidazole-4-carboxamide = 5-formamido-1-(5-phospho-D-ribosyl)imidazole-4-carboxamide + (6S)-5,6,7,8-tetrahydrofolate. It catalyses the reaction IMP + H2O = 5-formamido-1-(5-phospho-D-ribosyl)imidazole-4-carboxamide. The protein operates within purine metabolism; IMP biosynthesis via de novo pathway; 5-formamido-1-(5-phospho-D-ribosyl)imidazole-4-carboxamide from 5-amino-1-(5-phospho-D-ribosyl)imidazole-4-carboxamide (10-formyl THF route): step 1/1. Its pathway is purine metabolism; IMP biosynthesis via de novo pathway; IMP from 5-formamido-1-(5-phospho-D-ribosyl)imidazole-4-carboxamide: step 1/1. This chain is Bifunctional purine biosynthesis protein PurH, found in Chlorobium luteolum (strain DSM 273 / BCRC 81028 / 2530) (Pelodictyon luteolum).